The primary structure comprises 430 residues: tRNA(Ile)-lysidine synthase (430 aa).

21-26 (SGGLDS) contacts ATP.

This sequence belongs to the tRNA(Ile)-lysidine synthase family.

It is found in the cytoplasm. The enzyme catalyses cytidine(34) in tRNA(Ile2) + L-lysine + ATP = lysidine(34) in tRNA(Ile2) + AMP + diphosphate + H(+). Its function is as follows. Ligates lysine onto the cytidine present at position 34 of the AUA codon-specific tRNA(Ile) that contains the anticodon CAU, in an ATP-dependent manner. Cytidine is converted to lysidine, thus changing the amino acid specificity of the tRNA from methionine to isoleucine. The protein is tRNA(Ile)-lysidine synthase of Salmonella dublin (strain CT_02021853).